A 432-amino-acid chain; its full sequence is Putative D-alanyl-D-alanine carboxypeptidase (432 aa).

Residues 7 to 25 (ATVLLTFSLSAFAVEYPVL) form a helical; Signal-anchor membrane-spanning segment.

The protein belongs to the peptidase S12 family. YfeW subfamily.

It is found in the cell inner membrane. The catalysed reaction is Preferential cleavage: (Ac)2-L-Lys-D-Ala-|-D-Ala. Also transpeptidation of peptidyl-alanyl moieties that are N-acyl substituents of D-alanine.. The sequence is that of Putative D-alanyl-D-alanine carboxypeptidase from Salmonella enteritidis PT4 (strain P125109).